Reading from the N-terminus, the 430-residue chain is Histidine--tRNA ligase (430 aa).

Belongs to the class-II aminoacyl-tRNA synthetase family. In terms of assembly, homodimer.

It localises to the cytoplasm. It carries out the reaction tRNA(His) + L-histidine + ATP = L-histidyl-tRNA(His) + AMP + diphosphate + H(+). The sequence is that of Histidine--tRNA ligase from Chlorobaculum parvum (strain DSM 263 / NCIMB 8327) (Chlorobium vibrioforme subsp. thiosulfatophilum).